Reading from the N-terminus, the 435-residue chain is Methylenetetrahydrofolate--tRNA-(uracil-5-)-methyltransferase TrmFO (435 aa).

10–15 (GAGLAG) is an FAD binding site.

Belongs to the MnmG family. TrmFO subfamily. Homodimer. The cofactor is FAD.

The protein localises to the cytoplasm. The catalysed reaction is uridine(54) in tRNA + (6R)-5,10-methylene-5,6,7,8-tetrahydrofolate + NADH + H(+) = 5-methyluridine(54) in tRNA + (6S)-5,6,7,8-tetrahydrofolate + NAD(+). It catalyses the reaction uridine(54) in tRNA + (6R)-5,10-methylene-5,6,7,8-tetrahydrofolate + NADPH + H(+) = 5-methyluridine(54) in tRNA + (6S)-5,6,7,8-tetrahydrofolate + NADP(+). Its function is as follows. Catalyzes the folate-dependent formation of 5-methyl-uridine at position 54 (M-5-U54) in all tRNAs. This is Methylenetetrahydrofolate--tRNA-(uracil-5-)-methyltransferase TrmFO from Bacillus subtilis (strain 168).